The primary structure comprises 367 residues: MSQNGKIIPNLDQNSTRLLNLTVLQRIDPYIEEILITAAHVTFYEFNIELSQWSRKDVEGSLFVVKRSTQPRFQFIVMNRRNTDNLVENLLGDFEYEVQGPYLLYRNASQEVNGIWFYNKRECEEVATLFNRILSAYSKVNQKPKASSSKSEFEELEAKPTMAVMDGPLEPSSTARDAPDDPAFVNFFSSTMNLGNTASGSASGPYQSSAIPHQPHQPHQPTIAPPVAAAAPPQIQSPPPLQSSSPLMTLFDNNPEVISSNSNIHTDLVTPSFFGPPRMMAQPHLIPGVSMPTAPPLNPNNASHQQRSYGTPVLQPFPPPTPPPSLAPAPTGPVISRDKVKEALLSLLQEDEFIDKITRTLQNALQQ.

3 disordered regions span residues 144-179 (PKAS…RDAP), 196-246 (NTAS…SSSP), and 299-333 (PNNA…PTGP). Positions 196–211 (NTASGSASGPYQSSAI) are enriched in polar residues. Positions 212–234 (PHQPHQPHQPTIAPPVAAAAPPQ) are enriched in low complexity. Residues 299–309 (PNNASHQQRSY) show a composition bias toward polar residues. A compositionally biased stretch (pro residues) spans 315 to 331 (QPFPPPTPPPSLAPAPT).

Belongs to the DCP1 family. Homodimer. Component of the decapping complex. Interacts with DCP2 and DCP5. Interacts with BCHA1. In terms of tissue distribution, expressed in seedlings, mostly in root tips, root hairs, and the vascular system. Also present in roots, leaves, stems, and flowers.

The protein localises to the cytoplasm. It localises to the P-body. As a component of the decapping complex, involved in the degradation of mRNAs. Essential for postembryonic development. The polypeptide is mRNA-decapping enzyme-like protein (Arabidopsis thaliana (Mouse-ear cress)).